Reading from the N-terminus, the 239-residue chain is UDP-2,3-diacylglucosamine hydrolase (239 aa).

Residues aspartate 9, histidine 11, aspartate 42, asparagine 80, and histidine 115 each contribute to the Mn(2+) site. Position 80–81 (80–81 (NR)) interacts with substrate. Aspartate 123, serine 161, lysine 165, lysine 168, and histidine 196 together coordinate substrate. Mn(2+) is bound by residues histidine 196 and histidine 198.

Belongs to the LpxH family. Mn(2+) serves as cofactor.

The protein localises to the cell inner membrane. The enzyme catalyses UDP-2-N,3-O-bis[(3R)-3-hydroxytetradecanoyl]-alpha-D-glucosamine + H2O = 2-N,3-O-bis[(3R)-3-hydroxytetradecanoyl]-alpha-D-glucosaminyl 1-phosphate + UMP + 2 H(+). It functions in the pathway glycolipid biosynthesis; lipid IV(A) biosynthesis; lipid IV(A) from (3R)-3-hydroxytetradecanoyl-[acyl-carrier-protein] and UDP-N-acetyl-alpha-D-glucosamine: step 4/6. Its function is as follows. Hydrolyzes the pyrophosphate bond of UDP-2,3-diacylglucosamine to yield 2,3-diacylglucosamine 1-phosphate (lipid X) and UMP by catalyzing the attack of water at the alpha-P atom. Involved in the biosynthesis of lipid A, a phosphorylated glycolipid that anchors the lipopolysaccharide to the outer membrane of the cell. This Pasteurella multocida (strain Pm70) protein is UDP-2,3-diacylglucosamine hydrolase.